A 134-amino-acid chain; its full sequence is Transmembrane protein 100 (134 aa).

Residues 1 to 23 (MTEESTKENLGAPKSPTPVTMEK) are disordered. Ser-15 carries the post-translational modification Phosphoserine. 2 consecutive transmembrane segments (helical) span residues 56-76 (CIIP…AVAY) and 84-104 (IISI…ASSA). The residue at position 121 (Ser-121) is a Phosphoserine.

Interacts (via C-terminus) with TRPA1 and TRPV1. Interacts with TASOR. Expressed in dorsal root ganglia. Expressed in neurons as well as nerve fiber bundles connecting ganglia and fibers innervating muscle layer of the gastric body, jejunum, and proximal colon. Expressed in arterial endothelial cells and neurons of the central nervous system and peripheral nervous system (at protein level). Expressed strongly in lung, weakly in brain, heart and muscle. Expressed in enteric neurons and vascular tissue in the muscularis propria of the gastrointestinal tract.

It localises to the cell membrane. It is found in the membrane. Its subcellular location is the perikaryon. The protein localises to the cytoplasm. The protein resides in the perinuclear region. It localises to the endoplasmic reticulum. In terms of biological role, plays a role during embryonic arterial endothelium differentiation and vascular morphogenesis through the ACVRL1 receptor-dependent signaling pathway upon stimulation by bone morphogenetic proteins, such as GDF2/BMP9 and BMP10. Involved in the regulation of nociception, acting as a modulator of the interaction between TRPA1 and TRPV1, two molecular sensors and mediators of pain signals in dorsal root ganglia (DRG) neurons. Mechanistically, it weakens their interaction, thereby releasing the inhibition of TRPA1 by TRPV1 and increasing the single-channel open probability of the TRPA1-TRPV1 complex. The protein is Transmembrane protein 100 (Tmem100) of Mus musculus (Mouse).